Here is a 471-residue protein sequence, read N- to C-terminus: Trigger factor (471 aa).

In terms of domain architecture, PPIase FKBP-type spans 171 to 262 (GDLAIVDYAA…LKEIKFRELP (92 aa)). The tract at residues 440–471 (PEGSLSQTEEDTPDDDAEEEAIVDVEATSDEE) is disordered. The segment covering 447–471 (TEEDTPDDDAEEEAIVDVEATSDEE) has biased composition (acidic residues).

Belongs to the FKBP-type PPIase family. Tig subfamily.

The protein resides in the cytoplasm. It carries out the reaction [protein]-peptidylproline (omega=180) = [protein]-peptidylproline (omega=0). Functionally, involved in protein export. Acts as a chaperone by maintaining the newly synthesized protein in an open conformation. Functions as a peptidyl-prolyl cis-trans isomerase. This Synechocystis sp. (strain ATCC 27184 / PCC 6803 / Kazusa) protein is Trigger factor (tig).